Reading from the N-terminus, the 368-residue chain is Galanin receptor type 3 (368 aa).

Residues 1 to 20 (MADAQNISLDSPGSVGAVAV) are Extracellular-facing. Asn6 carries N-linked (GlcNAc...) asparagine glycosylation. The helical transmembrane segment at 21-41 (PVVFALIFLLGTVGNGLVLAV) threads the bilayer. The Cytoplasmic portion of the chain corresponds to 42–57 (LLQPGPSAWQEPGSTT). The helical transmembrane segment at 58-78 (DLFILNLAVADLCFILCCVPF) threads the bilayer. Residues 79 to 96 (QATIYTLDAWLFGALVCK) lie on the Extracellular side of the membrane. Cys95 and Cys172 are joined by a disulfide. A helical membrane pass occupies residues 97–118 (AVHLLIYLTMYASSFTLAAVSV). Over 119 to 138 (DRYLAVRHPLRSRALRTPRN) the chain is Cytoplasmic. Residues 139–159 (ARAAVGLVWLLAALFSAPYLS) traverse the membrane as a helical segment. Over 160–184 (YYGTVRYGALELCVPAWEDARRRAL) the chain is Extracellular. Residues 185–205 (DVATFAAGYLLPVAVVSLAYG) traverse the membrane as a helical segment. At 206 to 236 (RTLRFLWAAVGPAGAAAAEARRRATGRAGRA) the chain is on the cytoplasmic side. Residues 237–257 (MLAVAALYALCWGPHHALILC) traverse the membrane as a helical segment. Over 258–259 (FW) the chain is Extracellular. Residues 260–280 (YGRFAFSPATYACRLASHCLA) traverse the membrane as a helical segment. Over 281-368 (YANSCLNPLV…HGGEAARGPE (88 aa)) the chain is Cytoplasmic. Residue Cys308 is the site of S-palmitoyl cysteine attachment. Residues 317–368 (RRALRRVRPASSGPPGCPGDARPSGRLLAGGGQGPEPREGPVHGGEAARGPE) are disordered.

Belongs to the G-protein coupled receptor 1 family.

Its subcellular location is the cell membrane. Its function is as follows. Receptor for the hormone galanin. Receptor for the hormone spexin-1. The polypeptide is Galanin receptor type 3 (GALR3) (Homo sapiens (Human)).